A 367-amino-acid chain; its full sequence is Alginate lyase (367 aa).

Positions 1-27 are cleaved as a signal peptide; it reads MKTSHLIRITLPGALAAALLASQVSQA. Residues 65–66, 138–139, and Tyr256 each bind substrate; these read SK and HT.

The protein belongs to the polysaccharide lyase 5 family.

It is found in the periplasm. It catalyses the reaction Eliminative cleavage of alginate to give oligosaccharides with 4-deoxy-alpha-L-erythro-hex-4-enuronosyl groups at their non-reducing ends and beta-D-mannuronate at their reducing end.. Catalyzes the depolymerization of alginate by cleaving the beta-1,4 glycosidic bond between two adjacent sugar residues via a beta-elimination mechanism. May serve to degrade mislocalized alginate that is trapped in the periplasmic space. The protein is Alginate lyase of Pseudomonas paraeruginosa (strain DSM 24068 / PA7) (Pseudomonas aeruginosa (strain PA7)).